Consider the following 230-residue polypeptide: Enolase-phosphatase E1 (230 aa).

Belongs to the HAD-like hydrolase superfamily. MasA/MtnC family. Monomer. It depends on Mg(2+) as a cofactor.

The enzyme catalyses 5-methylsulfanyl-2,3-dioxopentyl phosphate + H2O = 1,2-dihydroxy-5-(methylsulfanyl)pent-1-en-3-one + phosphate. Its pathway is amino-acid biosynthesis; L-methionine biosynthesis via salvage pathway; L-methionine from S-methyl-5-thio-alpha-D-ribose 1-phosphate: step 3/6. It participates in amino-acid biosynthesis; L-methionine biosynthesis via salvage pathway; L-methionine from S-methyl-5-thio-alpha-D-ribose 1-phosphate: step 4/6. Its function is as follows. Bifunctional enzyme that catalyzes the enolization of 2,3-diketo-5-methylthiopentyl-1-phosphate (DK-MTP-1-P) into the intermediate 2-hydroxy-3-keto-5-methylthiopentenyl-1-phosphate (HK-MTPenyl-1-P), which is then dephosphorylated to form the acireductone 1,2-dihydroxy-3-keto-5-methylthiopentene (DHK-MTPene). This is Enolase-phosphatase E1 from Marinobacter nauticus (strain ATCC 700491 / DSM 11845 / VT8) (Marinobacter aquaeolei).